The sequence spans 126 residues: UPF0538 protein C2orf76 homolog (126 aa).

It belongs to the UPF0538 family.

This chain is UPF0538 protein C2orf76 homolog, found in Xenopus tropicalis (Western clawed frog).